The primary structure comprises 1189 residues: Zinc finger CCCH domain-containing protein 6 (1189 aa).

The span at 1 to 12 (MTDSEHAGHDRE) shows a compositional bias: basic and acidic residues. The interval 1–105 (MTDSEHAGHD…HKKRTGFYRD (105 aa)) is disordered. Residues 13-28 (DGELEDGEIDDAGFEE) show a composition bias toward acidic residues. The stretch at 27–73 (EEIQEKEAKENEKQKSEKAYRKSRKKHKKEREKKKSKRRKREKHKHN) forms a coiled coil. Over residues 29-46 (IQEKEAKENEKQKSEKAY) the composition is skewed to basic and acidic residues. Over residues 47–73 (RKSRKKHKKEREKKKSKRRKREKHKHN) the composition is skewed to basic residues. C3H1-type zinc fingers lie at residues 273-299 (KGKQ…HDAE), 301-328 (EKRK…HNEF), and 329-352 (PCKF…HDDL). Residues 353-385 (TKETKKLLDKVLNTDEELINEDERELEELRKRG) adopt a coiled-coil conformation. Disordered regions lie at residues 451-530 (FYTS…GPQN), 630-659 (PPVV…PVPG), 676-755 (YQED…GNQV), 947-1026 (LEQF…PYAP), and 1051-1189 (PRDH…SPFC). The span at 461-478 (QFQGSSPHPQHIYSSGSS) shows a compositional bias: low complexity. Residues 505–525 (AGPPGLPVPQSPPLPPGPPEI) are compositionally biased toward pro residues. Residues 639 to 659 (HGSGSDGSSTRTGHGPLPVPG) are compositionally biased toward low complexity. A compositionally biased stretch (polar residues) spans 718-741 (KTLQKQTETLRNQQQPSTELSTPT). Positions 961–973 (GDPRLQKNFDPRL) are enriched in basic and acidic residues. Low complexity-rich tracts occupy residues 1009 to 1020 (SGAGTSNSGSGA) and 1056 to 1069 (SSST…SSGE). Serine 1158 bears the Phosphoserine mark. A compositionally biased stretch (basic and acidic residues) spans 1164–1179 (DPGRETDDKSLKEVFK).

This chain is Zinc finger CCCH domain-containing protein 6 (ZC3H6), found in Homo sapiens (Human).